A 507-amino-acid polypeptide reads, in one-letter code: Maturase K (507 aa).

It belongs to the intron maturase 2 family. MatK subfamily.

It is found in the plastid. The protein localises to the chloroplast. In terms of biological role, usually encoded in the trnK tRNA gene intron. Probably assists in splicing its own and other chloroplast group II introns. This chain is Maturase K, found in Lyonia ligustrina (Maleberry).